The chain runs to 359 residues: Nicotinate-nucleotide--dimethylbenzimidazole phosphoribosyltransferase (359 aa).

Residue glutamate 318 is the Proton acceptor of the active site.

This sequence belongs to the CobT family. As to quaternary structure, homodimer.

The enzyme catalyses 5,6-dimethylbenzimidazole + nicotinate beta-D-ribonucleotide = alpha-ribazole 5'-phosphate + nicotinate + H(+). The protein operates within nucleoside biosynthesis; alpha-ribazole biosynthesis; alpha-ribazole from 5,6-dimethylbenzimidazole: step 1/2. Catalyzes the synthesis of alpha-ribazole-5'-phosphate from nicotinate mononucleotide (NAMN) and 5,6-dimethylbenzimidazole (DMB). This chain is Nicotinate-nucleotide--dimethylbenzimidazole phosphoribosyltransferase, found in Escherichia coli O8 (strain IAI1).